A 548-amino-acid chain; its full sequence is Pentatricopeptide repeat-containing protein At1g62680, mitochondrial (548 aa).

The transit peptide at M1–A43 directs the protein to the mitochondrion. 12 PPR repeats span residues S84–N118, D119–P153, D154–P188, D189–P223, N224–P258, N259–P293, D294–A328, D329–S363, N364–P398, D399–L433, D434–P468, and D469–K503.

It belongs to the PPR family. P subfamily.

The protein localises to the mitochondrion. This chain is Pentatricopeptide repeat-containing protein At1g62680, mitochondrial, found in Arabidopsis thaliana (Mouse-ear cress).